The following is a 159-amino-acid chain: Transcriptional repressor NrdR (159 aa).

Residues 3 to 34 (CPFCGSDNTSVKDSRAAEDDTAVRRRRVCESC) fold into a zinc finger. In terms of domain architecture, ATP-cone spans 49 to 139 (IIVVKRDGKR…VYRDFKDPSD (91 aa)).

The protein belongs to the NrdR family. The cofactor is Zn(2+).

Functionally, negatively regulates transcription of bacterial ribonucleotide reductase nrd genes and operons by binding to NrdR-boxes. The sequence is that of Transcriptional repressor NrdR from Hyphomonas neptunium (strain ATCC 15444).